The following is a 574-amino-acid chain: 5'-nucleotidase (574 aa).

Residues 1–26 form the signal peptide; that stretch reads MNPGAARTPALRILALGALLWPAARP. Positions 36 and 38 each coordinate Zn(2+). An intrachain disulfide couples Cys51 to Cys57. Asn53 is a glycosylation site (N-linked (GlcNAc...) asparagine). Zn(2+)-binding residues include Asp85, Asn117, His220, and His243. N-linked (GlcNAc...) asparagine glycosylation is found at Asn311 and Asn333. Disulfide bonds link Cys353–Cys358 and Cys365–Cys387. Residue Arg354 participates in AMP binding. Arg354 provides a ligand contact to IMP. AMP contacts are provided by Asn390 and Arg395. Asn390 and Arg395 together coordinate IMP. The N-linked (GlcNAc...) asparagine glycan is linked to Asn403. An AMP-binding site is contributed by Phe417. Phe417 contributes to the IMP binding site. Residues Cys476 and Cys479 are joined by a disulfide bond. AMP is bound by residues Phe500 and Asp506. IMP contacts are provided by Phe500 and Asp506. Residue Ser549 is the site of GPI-anchor amidated serine attachment. A propeptide spans 550–574 (removed in mature form); it reads AGSHCCGSFSLIFLSVLAVIIILYQ.

This sequence belongs to the 5'-nucleotidase family. In terms of assembly, homodimer. Zn(2+) serves as cofactor.

Its subcellular location is the cell membrane. The enzyme catalyses a ribonucleoside 5'-phosphate + H2O = a ribonucleoside + phosphate. The catalysed reaction is a 2'-deoxyribonucleoside 5'-phosphate + H2O = a 2'-deoxyribonucleoside + phosphate. It catalyses the reaction dTMP + H2O = thymidine + phosphate. It carries out the reaction CMP + H2O = cytidine + phosphate. The enzyme catalyses IMP + H2O = inosine + phosphate. The catalysed reaction is AMP + H2O = adenosine + phosphate. It catalyses the reaction GMP + H2O = guanosine + phosphate. It carries out the reaction UMP + H2O = uridine + phosphate. The enzyme catalyses dAMP + H2O = 2'-deoxyadenosine + phosphate. The catalysed reaction is dCMP + H2O = 2'-deoxycytidine + phosphate. Its function is as follows. Catalyzes the hydrolysis of nucleotide monophosphates, releasing inorganic phosphate and the corresponding nucleoside, with AMP being the preferred substrate. Shows a preference for ribonucleotide monophosphates over their equivalent deoxyribose forms. Other substrates include IMP, UMP, GMP, CMP, dAMP, dCMP, dTMP, NAD and NMN. The sequence is that of 5'-nucleotidase (NT5E) from Bos taurus (Bovine).